The chain runs to 763 residues: Protein CHROMATIN REMODELING 19 (763 aa).

2 disordered regions span residues 1-43 and 114-149; these read MKRD…TPSI and EDEE…RGED. Positions 23-34 are enriched in basic residues; it reads VLKRPRTPKKTR. Residues 114–135 show a composition bias toward acidic residues; it reads EDEEASDDDDDEAESSASEDEF. The region spanning 226 to 404 is the Helicase ATP-binding domain; the sequence is LLYKKGIEGA…WSLLEFMLPD (179 aa). Residue 239-246 participates in ATP binding; the sequence is DEMGLGKT. The DEAH box motif lies at 353–356; it reads DEAH. The stretch at 462-482 forms a coiled coil; that stretch reads RKQEDAYKEAIEEYRAASQAR. Positions 520–527 match the Nuclear localization signal motif; it reads IRRIYSDE. The Helicase C-terminal domain maps to 592-742; that stretch reads TLAELLPSMK…AAVLESGVHV (151 aa).

The protein belongs to the SNF2/RAD54 helicase family. As to quaternary structure, interacts with SUVR2 and itself.

Its subcellular location is the nucleus. Its function is as follows. DNA helicase that possesses intrinsic ATP-dependent nucleosome-remodeling activity and is both required for DNA repair and heterochromatin organization. Promotes DNA end resection of double-strand breaks (DSBs) following DNA damage: probably acts by weakening histone DNA interactions in nucleosomes flanking DSBs. Probable chromatin remodeling factor. Probable helicase-like transcription factor involved in transcriptional gene silencing. Associates with SUVR2 and contributes to transcriptional gene silencing at RNA-directed DNA methylation (RdDM) target loci but also at RdDM-independent target loci. May be involved in nucleosome positioning to form ordered nucleosome arrays on chromatin. The polypeptide is Protein CHROMATIN REMODELING 19 (Arabidopsis thaliana (Mouse-ear cress)).